A 698-amino-acid chain; its full sequence is Dynein regulatory complex protein 1 (698 aa).

2 stretches are compositionally biased toward basic and acidic residues: residues 27-47 (ALREGDHGGGKEGENKEEIGK) and 76-90 (AGDDRENQHRIQEEQ). Disordered regions lie at residues 27–50 (ALREGDHGGGKEGENKEEIGKGKQ) and 71–90 (SSVRVAGDDRENQHRIQEEQ). Positions 183-367 (MSRQFVEVQN…DLQSKFRHFE (185 aa)) form a coiled coil. The interval 425 to 461 (SGGGAAAAATGGAAGGAAAAGGVGPNGEEESEEDAAA) is disordered. The span at 436–449 (GAAGGAAAAGGVGP) shows a compositional bias: gly residues. Residues 655–685 (QERAGSLRDVESLQHQNNELRALLNQYLSSR) adopt a coiled-coil conformation.

The protein belongs to the DRC1 family. Component of the nexin-dynein regulatory complex (N-DRC). Interacts with DRC4 and DRC5.

Its subcellular location is the cytoplasm. The protein localises to the cytoskeleton. It is found in the cilium axoneme. It localises to the flagellum axoneme. Component of the nexin-dynein regulatory complex (N-DRC) a key regulator of ciliary/flagellar motility which maintains the alignment and integrity of the distal axoneme and regulates microtubule sliding in motile axonemes. Plays a critical role in the assembly of N-DRC and also stabilizes the assembly of multiple inner dynein arms and radial spokes. Coassembles with DRC2 to form a central scaffold needed for assembly of the N-DRC and its attachment to the outer doublet microtubules. In Chlamydomonas reinhardtii (Chlamydomonas smithii), this protein is Dynein regulatory complex protein 1 (DRC1).